The following is a 185-amino-acid chain: Elongation factor P (185 aa).

This sequence belongs to the elongation factor P family.

The protein resides in the cytoplasm. Its pathway is protein biosynthesis; polypeptide chain elongation. Functionally, involved in peptide bond synthesis. Stimulates efficient translation and peptide-bond synthesis on native or reconstituted 70S ribosomes in vitro. Probably functions indirectly by altering the affinity of the ribosome for aminoacyl-tRNA, thus increasing their reactivity as acceptors for peptidyl transferase. The polypeptide is Elongation factor P (Halalkalibacterium halodurans (strain ATCC BAA-125 / DSM 18197 / FERM 7344 / JCM 9153 / C-125) (Bacillus halodurans)).